A 117-amino-acid chain; its full sequence is Photosystem II reaction center Psb28 protein (117 aa).

Belongs to the Psb28 family. In terms of assembly, part of the photosystem II complex.

Its subcellular location is the cellular thylakoid membrane. This is Photosystem II reaction center Psb28 protein from Prochlorococcus marinus (strain AS9601).